The sequence spans 755 residues: MKFNQFSYIPVSPETAYQELRSLGFEVSLDASAKANFESFVRKYFLFFEDTDLALKNWIADPETDLLSFFQSDRPLTAEVFGLVALQLLGFVPNVDFTDSVAFLEKMAFPIAFDGSLNNLHQLLATRTQSGNTLIDQLVAQDLIPISNDYVFFNGKSLATFDTNQLHREVVYVETPVDTDKDGLLDLVKVTILRPNVDFPVPAMMTASPYQQGTNEPSSDKLTHKMEGDLLVKPAGKISLSRPEIKAPEADLTPINPVTKAEERFAHTDTYTLNDYMLARGVASIYVSGVGTFNSEGFMTSGDYQQVLAYKAVIDWLNGRARAFTSRSRQHTITADWASGKVTTTGLSYLGTMSNALATTGVDGLEMVIAEAGISSWYDYYRENGLLVSPGGYPGEDLDTLTEFTYSRALLAGEYLRHQKDYEAYLNELSTAIDRKHGDYNQFWHDRNYVQFADRVKATVVFTHGSQDWNVKPINVYQMFRALPKSLEKHLFFHNGAHVYMNAWQSIDFRESMNALICQKLLGLDNGYTLPTVIWQNNQSEQTWEVLDNFGHDNGKHIQLGKSEASIANHYEEEIFAKYGKAYQSFKDDLFMDKANAITLDFELDQDIQINGRVHLELRVKSSTNRGLISAQVLEMGDKKYLAPIPAPKRMSLDNGRLFKEEALRELPFKQAKYRVITKGHLNLQNRKDLLSIENVTPNEWMTIGLDLQPTIYKLNKGDKLRLVLYTTDFEHTIRDNSDYEVTVDLSQSKMTLPY.

Active-site charge relay system residues include S348, D468, and H498.

This sequence belongs to the peptidase S15 family. In terms of assembly, homodimer.

It is found in the cytoplasm. It catalyses the reaction Hydrolyzes Xaa-Pro-|- bonds to release unblocked, N-terminal dipeptides from substrates including Ala-Pro-|-p-nitroanilide and (sequentially) Tyr-Pro-|-Phe-Pro-|-Gly-Pro-|-Ile.. In terms of biological role, removes N-terminal dipeptides sequentially from polypeptides having unsubstituted N-termini provided that the penultimate residue is proline. The polypeptide is Xaa-Pro dipeptidyl-peptidase (Streptococcus thermophilus (strain ATCC BAA-250 / LMG 18311)).